The primary structure comprises 220 residues: Fructose-6-phosphate aldolase (220 aa).

K85 (schiff-base intermediate with substrate) is an active-site residue.

This sequence belongs to the transaldolase family. Type 3A subfamily. As to quaternary structure, homodecamer.

The protein localises to the cytoplasm. The enzyme catalyses beta-D-fructose 6-phosphate = dihydroxyacetone + D-glyceraldehyde 3-phosphate. In terms of biological role, catalyzes the reversible formation of fructose 6-phosphate from dihydroxyacetone and D-glyceraldehyde 3-phosphate via an aldolization reaction. This Salmonella typhi protein is Fructose-6-phosphate aldolase.